Here is a 405-residue protein sequence, read N- to C-terminus: uncharacterized protein (405 aa).

This is an uncharacterized protein from Schizosaccharomyces pombe (strain 972 / ATCC 24843) (Fission yeast).